Consider the following 116-residue polypeptide: Putative membrane protein insertion efficiency factor (116 aa).

It belongs to the UPF0161 family.

The protein resides in the cell inner membrane. Its function is as follows. Could be involved in insertion of integral membrane proteins into the membrane. This is Putative membrane protein insertion efficiency factor from Bartonella tribocorum (strain CIP 105476 / IBS 506).